A 407-amino-acid polypeptide reads, in one-letter code: Probable tRNA sulfurtransferase (407 aa).

One can recognise a THUMP domain in the interval 61-165 (NEIIQRLSKV…MDAIYIYEKV (105 aa)). Residues 183 to 184 (ML), 208 to 209 (HF), Arg-265, Gly-287, and Gln-296 each bind ATP.

Belongs to the ThiI family.

Its subcellular location is the cytoplasm. The catalysed reaction is [ThiI sulfur-carrier protein]-S-sulfanyl-L-cysteine + a uridine in tRNA + 2 reduced [2Fe-2S]-[ferredoxin] + ATP + H(+) = [ThiI sulfur-carrier protein]-L-cysteine + a 4-thiouridine in tRNA + 2 oxidized [2Fe-2S]-[ferredoxin] + AMP + diphosphate. It catalyses the reaction [ThiS sulfur-carrier protein]-C-terminal Gly-Gly-AMP + S-sulfanyl-L-cysteinyl-[cysteine desulfurase] + AH2 = [ThiS sulfur-carrier protein]-C-terminal-Gly-aminoethanethioate + L-cysteinyl-[cysteine desulfurase] + A + AMP + 2 H(+). It participates in cofactor biosynthesis; thiamine diphosphate biosynthesis. Its function is as follows. Catalyzes the ATP-dependent transfer of a sulfur to tRNA to produce 4-thiouridine in position 8 of tRNAs, which functions as a near-UV photosensor. Also catalyzes the transfer of sulfur to the sulfur carrier protein ThiS, forming ThiS-thiocarboxylate. This is a step in the synthesis of thiazole, in the thiamine biosynthesis pathway. The sulfur is donated as persulfide by IscS. This is Probable tRNA sulfurtransferase from Staphylococcus epidermidis (strain ATCC 35984 / DSM 28319 / BCRC 17069 / CCUG 31568 / BM 3577 / RP62A).